The sequence spans 463 residues: Asparagine--tRNA ligase (463 aa).

Belongs to the class-II aminoacyl-tRNA synthetase family. Homodimer.

It is found in the cytoplasm. The catalysed reaction is tRNA(Asn) + L-asparagine + ATP = L-asparaginyl-tRNA(Asn) + AMP + diphosphate + H(+). This is Asparagine--tRNA ligase from Clostridium tetani (strain Massachusetts / E88).